The sequence spans 385 residues: Protein kup-1 (385 aa).

Disordered regions lie at residues 1-20 (MDDE…VRED) and 326-385 (SLAS…PDEY). Composition is skewed to basic and acidic residues over residues 8-20 (GSDH…VRED), 339-351 (RTDE…DDIV), and 364-385 (GRVE…PDEY).

This Caenorhabditis elegans protein is Protein kup-1 (kup-1).